A 446-amino-acid chain; its full sequence is Phosphoglucosamine mutase (446 aa).

Ser100 functions as the Phosphoserine intermediate in the catalytic mechanism. Mg(2+) is bound by residues Ser100, Asp241, Asp243, and Asp245. Residue Ser100 is modified to Phosphoserine.

The protein belongs to the phosphohexose mutase family. Mg(2+) serves as cofactor. In terms of processing, activated by phosphorylation.

It catalyses the reaction alpha-D-glucosamine 1-phosphate = D-glucosamine 6-phosphate. In terms of biological role, catalyzes the conversion of glucosamine-6-phosphate to glucosamine-1-phosphate. This Methylorubrum populi (strain ATCC BAA-705 / NCIMB 13946 / BJ001) (Methylobacterium populi) protein is Phosphoglucosamine mutase.